The chain runs to 273 residues: Energy-coupling factor transporter ATP-binding protein EcfA (273 aa).

The ABC transporter domain maps to 2–237 (ISIRDLTYFY…RASLLALGLA (236 aa)). 36–43 (GRNGSGKS) is a binding site for ATP.

The protein belongs to the ABC transporter superfamily. Energy-coupling factor EcfA family. In terms of assembly, forms a stable energy-coupling factor (ECF) transporter complex composed of 2 membrane-embedded substrate-binding proteins (S component), 2 ATP-binding proteins (A component) and 2 transmembrane proteins (T component).

The protein localises to the cell membrane. Functionally, ATP-binding (A) component of a common energy-coupling factor (ECF) ABC-transporter complex. Unlike classic ABC transporters this ECF transporter provides the energy necessary to transport a number of different substrates. This Syntrophomonas wolfei subsp. wolfei (strain DSM 2245B / Goettingen) protein is Energy-coupling factor transporter ATP-binding protein EcfA.